We begin with the raw amino-acid sequence, 374 residues long: Deoxyguanosinetriphosphate triphosphohydrolase-like protein (374 aa).

An HD domain is found at Arg65 to Asn196.

It belongs to the dGTPase family. Type 2 subfamily.

This is Deoxyguanosinetriphosphate triphosphohydrolase-like protein (dgt) from Nitrosomonas europaea (strain ATCC 19718 / CIP 103999 / KCTC 2705 / NBRC 14298).